The sequence spans 332 residues: Fructose-1,6-bisphosphatase class 1 (332 aa).

4 residues coordinate Mg(2+): Glu-89, Asp-110, Leu-112, and Asp-113. Residues 113 to 116, Asn-206, Tyr-239, 257 to 259, and Lys-269 each bind substrate; these read DGSS and YLY. Glu-275 is a binding site for Mg(2+).

The protein belongs to the FBPase class 1 family. In terms of assembly, homotetramer. It depends on Mg(2+) as a cofactor.

The protein resides in the cytoplasm. It carries out the reaction beta-D-fructose 1,6-bisphosphate + H2O = beta-D-fructose 6-phosphate + phosphate. The protein operates within carbohydrate biosynthesis; gluconeogenesis. The polypeptide is Fructose-1,6-bisphosphatase class 1 (Salmonella gallinarum (strain 287/91 / NCTC 13346)).